Consider the following 331-residue polypeptide: 6-phosphogluconolactonase (331 aa).

Lys-287 carries the post-translational modification N6-acetyllysine.

Belongs to the cycloisomerase 2 family.

It catalyses the reaction 6-phospho-D-glucono-1,5-lactone + H2O = 6-phospho-D-gluconate + H(+). The protein operates within carbohydrate degradation; pentose phosphate pathway; D-ribulose 5-phosphate from D-glucose 6-phosphate (oxidative stage): step 2/3. Its function is as follows. Catalyzes the hydrolysis of 6-phosphogluconolactone to 6-phosphogluconate. The polypeptide is 6-phosphogluconolactonase (Shigella flexneri).